A 243-amino-acid chain; its full sequence is Ribonuclease PH (243 aa).

Residues Arg-91 and 129–131 (GTR) contribute to the phosphate site.

Belongs to the RNase PH family. As to quaternary structure, homohexameric ring arranged as a trimer of dimers.

It carries out the reaction tRNA(n+1) + phosphate = tRNA(n) + a ribonucleoside 5'-diphosphate. Functionally, phosphorolytic 3'-5' exoribonuclease that plays an important role in tRNA 3'-end maturation. Removes nucleotide residues following the 3'-CCA terminus of tRNAs; can also add nucleotides to the ends of RNA molecules by using nucleoside diphosphates as substrates, but this may not be physiologically important. Probably plays a role in initiation of 16S rRNA degradation (leading to ribosome degradation) during starvation. This is Ribonuclease PH from Burkholderia lata (strain ATCC 17760 / DSM 23089 / LMG 22485 / NCIMB 9086 / R18194 / 383).